The following is a 338-amino-acid chain: Transferrin receptor subunit ESAG7 (338 aa).

The signal sequence occupies residues 1–17; the sequence is MRFWFVLLALLGKEIYA. 2 N-linked (GlcNAc...) asparagine glycosylation sites follow: N26 and N110. Disulfide bonds link C34–C161, C84–C311, C144–C215, and C230–C247. N234 is a glycosylation site (N-linked (GlcNAc...) asparagine).

In terms of assembly, heterodimer composed of ESAG6 and ESAG7. N-glycosylated. Glycosylation is dispensable for heterodimer formation and host transferrin binding.

Its subcellular location is the cell membrane. The protein localises to the flagellar pocket. In terms of biological role, transferrin receptor subunit involved in receptor-mediated acquisition of iron from the environment by binding host TF/transferrin. In Trypanosoma brucei brucei, this protein is Transferrin receptor subunit ESAG7.